The primary structure comprises 134 residues: Cytochrome c-550 (134 aa).

Gln1 carries the post-translational modification Pyrrolidone carboxylic acid. The heme c site is built by Cys15, Cys18, His19, and Met100.

In terms of processing, binds 1 heme c group covalently per subunit.

Its function is as follows. Electron donor for nitrous-oxide reductase. The protein is Cytochrome c-550 of Paracoccus pantotrophus (Thiosphaera pantotropha).